The sequence spans 363 residues: 3-isopropylmalate dehydrogenase A (363 aa).

NAD(+) is bound at residue 78-89; the sequence is GPKWGTGAVRPE. Arginine 96, arginine 106, arginine 135, and aspartate 222 together coordinate substrate. Residues aspartate 222, aspartate 247, and aspartate 251 each contribute to the Mg(2+) site. Residue 287 to 299 participates in NAD(+) binding; the sequence is GSAPDIAGKGIVN.

The protein belongs to the isocitrate and isopropylmalate dehydrogenases family. As to quaternary structure, homodimer. Requires Mg(2+) as cofactor. The cofactor is Mn(2+).

Its subcellular location is the cytoplasm. The enzyme catalyses (2R,3S)-3-isopropylmalate + NAD(+) = 4-methyl-2-oxopentanoate + CO2 + NADH. Its pathway is amino-acid biosynthesis; L-leucine biosynthesis; L-leucine from 3-methyl-2-oxobutanoate: step 3/4. Catalyzes the oxidation of 3-carboxy-2-hydroxy-4-methylpentanoate (3-isopropylmalate) to 3-carboxy-4-methyl-2-oxopentanoate. The product decarboxylates to 4-methyl-2 oxopentanoate. This is 3-isopropylmalate dehydrogenase A (leu2A) from Aspergillus niger.